Reading from the N-terminus, the 513-residue chain is Xylose import ATP-binding protein XylG (513 aa).

ABC transporter domains are found at residues 5–242 and 259–505; these read LEMK…VERE and LRIE…LRSE. 37 to 44 serves as a coordination point for ATP; that stretch reads GENGSGKS.

The protein belongs to the ABC transporter superfamily. Xylose importer (TC 3.A.1.2.4) family. The complex is composed of two ATP-binding proteins (XylG), two transmembrane proteins (XylH) and a solute-binding protein (XylF).

It is found in the cell inner membrane. The enzyme catalyses D-xylose(out) + ATP + H2O = D-xylose(in) + ADP + phosphate + H(+). Functionally, part of the ABC transporter complex XylFGH involved in xylose import. Responsible for energy coupling to the transport system. The chain is Xylose import ATP-binding protein XylG from Shigella flexneri.